The primary structure comprises 504 residues: Maturase K (504 aa).

Belongs to the intron maturase 2 family. MatK subfamily.

It is found in the plastid. Its subcellular location is the chloroplast. Usually encoded in the trnK tRNA gene intron. Probably assists in splicing its own and other chloroplast group II introns. The polypeptide is Maturase K (Calyptranthes pallens (Spicewood)).